A 345-amino-acid chain; its full sequence is Guanine nucleotide-binding protein alpha-4 subunit (345 aa).

The G-alpha domain maps to 30-345; the sequence is KDVKLLLLGP…TILSQALEHF (316 aa). Positions 33-46 are G1 motif; that stretch reads KLLLLGPGESGKST. GTP-binding positions include 38–45, 171–177, 196–200, 265–268, and A320; these read GPGESGKS, LRCRVRT, DVGGQ, and NKKD. 2 residues coordinate Mg(2+): S45 and T177. The G2 motif stretch occupies residues 169 to 177; that stretch reads DVLRCRVRT. The segment at 192–201 is G3 motif; it reads LKIVDVGGQR. Positions 261 to 268 are G4 motif; that stretch reads VLFLNKKD. The segment at 318–323 is G5 motif; it reads TCAVDT.

It belongs to the G-alpha family. G proteins are composed of 3 units; alpha, beta and gamma. The alpha chain contains the guanine nucleotide binding site.

In terms of biological role, guanine nucleotide-binding proteins (G proteins) are involved as modulators or transducers in various transmembrane signaling systems. G alpha-4 plays a role in morphogenesis of the multicellular structure. The sequence is that of Guanine nucleotide-binding protein alpha-4 subunit (gpaD) from Dictyostelium discoideum (Social amoeba).